Consider the following 380-residue polypeptide: Protein COS12 (380 aa).

The Cytoplasmic segment spans residues 1–70 (MDGAKFENTV…WKIRGKRHYL (70 aa)). The chain crosses the membrane as a helical span at residues 71-91 (VIVTALMFEVLYFLWTYSYIF). Residues 92 to 231 (RERTLGKQVS…KLLWAFKEVT (140 aa)) are Extracellular-facing. Residues 232 to 252 (IMNSRFAFFSIAYLNGLLTIP) form a helical membrane-spanning segment. The Cytoplasmic portion of the chain corresponds to 253 to 257 (RLRNS). A helical transmembrane segment spans residues 258–278 (LHILYVCAVLSSMIIEYLIGI). Over 279–380 (DKFRFKSMNL…KEAQSACNDV (102 aa)) the chain is Extracellular.

The protein belongs to the DUP/COS family.

The protein localises to the membrane. The polypeptide is Protein COS12 (COS12) (Saccharomyces cerevisiae (strain ATCC 204508 / S288c) (Baker's yeast)).